The chain runs to 378 residues: Lipid-A-disaccharide synthase (378 aa).

The protein belongs to the LpxB family.

It catalyses the reaction a lipid X + a UDP-2-N,3-O-bis[(3R)-3-hydroxyacyl]-alpha-D-glucosamine = a lipid A disaccharide + UDP + H(+). It participates in bacterial outer membrane biogenesis; LPS lipid A biosynthesis. In terms of biological role, condensation of UDP-2,3-diacylglucosamine and 2,3-diacylglucosamine-1-phosphate to form lipid A disaccharide, a precursor of lipid A, a phosphorylated glycolipid that anchors the lipopolysaccharide to the outer membrane of the cell. The sequence is that of Lipid-A-disaccharide synthase from Methylobacillus flagellatus (strain ATCC 51484 / DSM 6875 / VKM B-1610 / KT).